Consider the following 116-residue polypeptide: Protein Wnt-5a (116 aa).

Ser-1 is lipidated: O-palmitoleoyl serine; by PORCN. Residues Asn-69 and Asn-83 are each glycosylated (N-linked (GlcNAc...) asparagine). A disulfide bridge connects residues Cys-82 and Cys-97.

This sequence belongs to the Wnt family. Post-translationally, palmitoleoylation is required for efficient binding to frizzled receptors. Depalmitoleoylation leads to Wnt signaling pathway inhibition.

Its subcellular location is the secreted. It localises to the extracellular space. It is found in the extracellular matrix. Functionally, ligand for members of the frizzled family of seven transmembrane receptors. Can activate or inhibit canonical Wnt signaling, depending on receptor context. Required during embryogenesis for extension of the primary anterior-posterior axis. The sequence is that of Protein Wnt-5a (WNT5A) from Anser caerulescens (Snow goose).